The chain runs to 1199 residues: Pyruvate-flavodoxin oxidoreductase (1199 aa).

4Fe-4S ferredoxin-type domains lie at 699 to 728 (EIPV…AKVY) and 755 to 784 (FTIQ…EPSL). [4Fe-4S] cluster-binding residues include Cys708, Cys711, Cys714, Cys718, Cys764, Cys767, Cys770, Cys774, Cys838, Cys841, Cys866, and Cys1103.

Belongs to the pyruvate:ferredoxin/flavodoxin oxidoreductase family. It depends on [4Fe-4S] cluster as a cofactor.

It carries out the reaction oxidized [flavodoxin] + pyruvate + CoA + 2 H(+) = reduced [flavodoxin] + acetyl-CoA + CO2. Functionally, oxidoreductase required for the transfer of electrons from pyruvate to flavodoxin, which reduces nitrogenase. This is Pyruvate-flavodoxin oxidoreductase (nifJ) from Nostoc sp. (strain PCC 7120 / SAG 25.82 / UTEX 2576).